The following is a 323-amino-acid chain: tRNA U34 carboxymethyltransferase (323 aa).

Carboxy-S-adenosyl-L-methionine contacts are provided by residues lysine 91, tryptophan 105, lysine 110, glycine 130, 152 to 154 (DPS), 181 to 182 (IE), methionine 196, tyrosine 200, and arginine 315.

The protein belongs to the class I-like SAM-binding methyltransferase superfamily. CmoB family. In terms of assembly, homotetramer.

It catalyses the reaction carboxy-S-adenosyl-L-methionine + 5-hydroxyuridine(34) in tRNA = 5-carboxymethoxyuridine(34) in tRNA + S-adenosyl-L-homocysteine + H(+). Catalyzes carboxymethyl transfer from carboxy-S-adenosyl-L-methionine (Cx-SAM) to 5-hydroxyuridine (ho5U) to form 5-carboxymethoxyuridine (cmo5U) at position 34 in tRNAs. The protein is tRNA U34 carboxymethyltransferase of Vibrio atlanticus (strain LGP32) (Vibrio splendidus (strain Mel32)).